Here is a 482-residue protein sequence, read N- to C-terminus: E3 ubiquitin-protein ligase makorin-1 (482 aa).

The segment covering 26–38 (ASPTPIPTVTAPS) has biased composition (low complexity). A disordered region spans residues 26–52 (ASPTPIPTVTAPSLGAGGGGGGSDGSG). Gly residues predominate over residues 40-52 (GAGGGGGGSDGSG). C3H1-type zinc fingers lie at residues 55-82 (WTKQ…HDLS), 84-111 (SPYS…HSKP), and 208-235 (ETKK…HGDS). Residues 236-263 (CDMCGLQVLHPMDAAQRSQHIKSCIEAH) are makorin-type Cys-His. The RING-type zinc finger occupies 281-335 (CGICMEVVYEKANPSERRFGILSNCNHTYCLKCIRKWRSAKQFESKIIKSCPECR). The C3H1-type 4 zinc finger occupies 364–393 (AMSNKACRYFDEGRGSCPFGGNCFYKHAYP).

As to quaternary structure, interacts with p53/TP53 and CDKN1A. Interacts with TERT, modulating telomere length homeostasis. Post-translationally, auto-ubiquitinated; which leads to proteasomal degradation. As to expression, ubiquitous.

The enzyme catalyses S-ubiquitinyl-[E2 ubiquitin-conjugating enzyme]-L-cysteine + [acceptor protein]-L-lysine = [E2 ubiquitin-conjugating enzyme]-L-cysteine + N(6)-ubiquitinyl-[acceptor protein]-L-lysine.. The protein operates within protein modification; protein ubiquitination. In terms of biological role, E3 ubiquitin ligase catalyzing the covalent attachment of ubiquitin moieties onto substrate proteins. These substrates include FILIP1, p53/TP53, CDKN1A and TERT. Keeps cells alive by suppressing p53/TP53 under normal conditions, but stimulates apoptosis by repressing CDKN1A under stress conditions. Acts as a negative regulator of telomerase. Has negative and positive effects on RNA polymerase II-dependent transcription. This chain is E3 ubiquitin-protein ligase makorin-1 (MKRN1), found in Homo sapiens (Human).